We begin with the raw amino-acid sequence, 433 residues long: MCVCQTMEVGQYGKNASRAGDRGVLLEPFIHQVGGHSSMMRYDDHTVCKPLISREQRFYESLPPEMKEFTPEYKGVVSVCFEGDSDGYINLVAYPYVESETVEQDDTPEREQPRRKHSRRSLHRSGSGSDHKEEKASLSFETSESSQEAKSPKVELHSHSDVPFQMLDSNSGLSSEKISYNPWSLRCHKQQLSRMRSESKDRKLYKFLLLENVVHHFKYPCVLDLKMGTRQHGDDASAEKAARQMRKCEQSTSATLGVRVCGMQVYQLDTGHYLCRNKYYGRGLSIEGFRNALYQYLHNGLDLRRDLFEPILSKLRGLKAVLERQASYRFYSSSLLVIYDGKECRSELRLKHVDMGLPEVPPPCGPSTSPSSTSLEAGPSSPPKVDVRMIDFAHSTFKGFRDDPTVHDGPDRGYVFGLENLISIMEQMRDENQ.

Residues 100–160 (ETVEQDDTPE…SPKVELHSHS (61 aa)) are disordered. The span at 113-123 (PRRKHSRRSLH) shows a compositional bias: basic residues. A compositionally biased stretch (polar residues) spans 139 to 149 (SFETSESSQEA). A compositionally biased stretch (basic and acidic residues) spans 150-160 (KSPKVELHSHS). Phosphoserine is present on S151. 220-228 (PCVLDLKMG) contacts substrate. The tract at residues 359 to 383 (EVPPPCGPSTSPSSTSLEAGPSSPP) is disordered.

Belongs to the inositol phosphokinase (IPK) family. In terms of tissue distribution, highly expressed in brain and testis. Detected at much lower levels in heart, kidney, liver, lung and spleen.

It localises to the cytoplasm. The protein resides in the nucleus. It carries out the reaction 1D-myo-inositol hexakisphosphate + ATP = 5-diphospho-1D-myo-inositol 1,2,3,4,6-pentakisphosphate + ADP. The enzyme catalyses 1-diphospho-1D-myo-inositol 2,3,4,5,6-pentakisphosphate + ATP + H(+) = 1,5-bis(diphospho)-1D-myo-inositol 2,3,4,6-tetrakisphosphate + ADP. In terms of biological role, converts inositol hexakisphosphate (InsP6) to diphosphoinositol pentakisphosphate (InsP7/PP-InsP5). Converts 1,3,4,5,6-pentakisphosphate (InsP5) to PP-InsP4. The chain is Inositol hexakisphosphate kinase 1 (Ip6k1) from Mus musculus (Mouse).